The sequence spans 345 residues: Probable translocation protein y4yO (345 aa).

Residues 1 to 22 are compositionally biased toward basic and acidic residues; that stretch reads MSDTSEEKSHGATPKKLSDARK. The tract at residues 1 to 25 is disordered; sequence MSDTSEEKSHGATPKKLSDARKRGQ. 3 consecutive transmembrane segments (helical) span residues 87-107, 151-171, and 189-209; these read LATV…AALL, VLVL…TMVY, and QLIG…LLLQ.

This sequence belongs to the type III secretion exporter family.

The protein localises to the cell membrane. In terms of biological role, could be involved in the secretion of an unknown factor. The protein is Probable translocation protein y4yO of Sinorhizobium fredii (strain NBRC 101917 / NGR234).